A 291-amino-acid chain; its full sequence is Shikimate dehydrogenase (NADP(+)) (291 aa).

Shikimate is bound by residues 18 to 20 (SLS) and Thr-70. Lys-74 acts as the Proton acceptor in catalysis. Shikimate contacts are provided by Asn-95 and Asp-110. Residues 134–138 (GAGGA) and Val-228 contribute to the NADP(+) site. Tyr-230 contacts shikimate. An NADP(+)-binding site is contributed by Gly-251.

This sequence belongs to the shikimate dehydrogenase family. Homodimer.

It carries out the reaction shikimate + NADP(+) = 3-dehydroshikimate + NADPH + H(+). It functions in the pathway metabolic intermediate biosynthesis; chorismate biosynthesis; chorismate from D-erythrose 4-phosphate and phosphoenolpyruvate: step 4/7. Functionally, involved in the biosynthesis of the chorismate, which leads to the biosynthesis of aromatic amino acids. Catalyzes the reversible NADPH linked reduction of 3-dehydroshikimate (DHSA) to yield shikimate (SA). The polypeptide is Shikimate dehydrogenase (NADP(+)) (Streptomyces avermitilis (strain ATCC 31267 / DSM 46492 / JCM 5070 / NBRC 14893 / NCIMB 12804 / NRRL 8165 / MA-4680)).